We begin with the raw amino-acid sequence, 343 residues long: Protein RecA (343 aa).

Position 66 to 73 (glycine 66 to threonine 73) interacts with ATP.

This sequence belongs to the RecA family.

The protein localises to the cytoplasm. Functionally, can catalyze the hydrolysis of ATP in the presence of single-stranded DNA, the ATP-dependent uptake of single-stranded DNA by duplex DNA, and the ATP-dependent hybridization of homologous single-stranded DNAs. It interacts with LexA causing its activation and leading to its autocatalytic cleavage. In Rickettsia conorii (strain ATCC VR-613 / Malish 7), this protein is Protein RecA.